The primary structure comprises 392 residues: Pyoverdine export membrane fusion protein PvdR (392 aa).

Positions 1–36 (MRRSTHTRRRLLLGGLGLLGLGSLLAWTSLPFGAQP) form a signal peptide, tat-type signal. The stretch at 109–181 (IDNLKAQLAE…NASLRSDEAE (73 aa)) forms a coiled coil. The tract at residues 267 to 286 (PPKPLDQTSQGGGSPASATA) is disordered.

Belongs to the membrane fusion protein (MFP) (TC 8.A.1) family. In terms of assembly, part of the tripartite efflux system PvdRT-OpmQ, which is composed of an inner membrane component with both ATPase and permease domains, PvdT, a periplasmic membrane fusion protein, PvdR, and an outer membrane component, OpmQ. Post-translationally, predicted to be exported by the Tat system. The position of the signal peptide cleavage has not been experimentally proven.

Its subcellular location is the periplasm. Its function is as follows. Part of the tripartite efflux system PvdRT-OpmQ required for the secretion into the extracellular milieu of the siderophore pyoverdine (PVD), which is involved in iron acquisition. This subunit is an adapter protein that stimulates the ATPase activity of PvdT and connects the inner and outer membrane components. The system is responsible for export of newly synthesized PVD after the final steps of biosynthesis have taken place in the periplasm. It is also responsible for recycling of PVD after internalization of ferri-PVD into the periplasm by the outer-membrane receptor FpvA and release of iron from PVD, thus making PVD available for new cycles of iron uptake. Contributes to resistance against ampicillin. The protein is Pyoverdine export membrane fusion protein PvdR of Pseudomonas putida (strain ATCC 47054 / DSM 6125 / CFBP 8728 / NCIMB 11950 / KT2440).